Consider the following 436-residue polypeptide: C4-dicarboxylate transport protein 2 (436 aa).

The next 9 membrane-spanning stretches (helical) occupy residues 14-34 (VLVAIAIGIALGHWYPETAVA), 45-65 (LIKMAIAPIIFCTVVTGIAGM), 77-97 (MALLYFEIVSTVALIIGLVVV), 142-162 (VVGAFANGDILQVLFFSVLFG), 198-218 (PIGAFGAMAFTIGAYGVGSLV), 223-243 (LMLCFYITCLLFVLIVLGGIA), 290-310 (VVGLVIPTGYSFNLDGTSIYL), 331-351 (ITLLLVLLIASKGAAGVTGSG), and 353-373 (IVLAATLSAVGHLPVAGLALI). A disordered region spans residues 414–436 (ELAGEGNASSPASDIPVGGREAV).

This sequence belongs to the dicarboxylate/amino acid:cation symporter (DAACS) (TC 2.A.23) family.

The protein localises to the cell inner membrane. Responsible for the transport of dicarboxylates such as succinate, fumarate, and malate from the periplasm across the membrane. This is C4-dicarboxylate transport protein 2 from Pseudomonas paraeruginosa (strain DSM 24068 / PA7) (Pseudomonas aeruginosa (strain PA7)).